Reading from the N-terminus, the 362-residue chain is Anthranilate phosphoribosyltransferase 2 (362 aa).

5-phospho-alpha-D-ribose 1-diphosphate-binding positions include glycine 103, 106–107, threonine 111, 113–116, 131–139, and serine 143; these read GD, NIST, and KHGNRSASS. Position 103 (glycine 103) interacts with anthranilate. Serine 115 is a binding site for Mg(2+). Anthranilate is bound at residue asparagine 134. Residue arginine 189 participates in anthranilate binding. The Mg(2+) site is built by aspartate 248 and glutamate 249.

The protein belongs to the anthranilate phosphoribosyltransferase family. In terms of assembly, homodimer. It depends on Mg(2+) as a cofactor.

The catalysed reaction is N-(5-phospho-beta-D-ribosyl)anthranilate + diphosphate = 5-phospho-alpha-D-ribose 1-diphosphate + anthranilate. It functions in the pathway amino-acid biosynthesis; L-tryptophan biosynthesis; L-tryptophan from chorismate: step 2/5. Functionally, catalyzes the transfer of the phosphoribosyl group of 5-phosphorylribose-1-pyrophosphate (PRPP) to anthranilate to yield N-(5'-phosphoribosyl)-anthranilate (PRA). The protein is Anthranilate phosphoribosyltransferase 2 of Nostoc sp. (strain PCC 7120 / SAG 25.82 / UTEX 2576).